The following is a 525-amino-acid chain: GMP synthase [glutamine-hydrolyzing] (525 aa).

The Glutamine amidotransferase type-1 domain maps to 13-202; the sequence is TILVLDFGSQ…AVEICQAAQT (190 aa). Residue cysteine 89 is the Nucleophile of the active site. Active-site residues include histidine 176 and glutamate 178. One can recognise a GMPS ATP-PPase domain in the interval 203–400; sequence WTMENFIDTE…LGISHELVWR (198 aa). 231–237 is a binding site for ATP; it reads SGGVDST. Positions 304, 462, 517, and 523 each coordinate XMP.

In terms of assembly, homodimer. Requires Mg(2+) as cofactor.

The protein resides in the cytoplasm. It localises to the cytosol. It carries out the reaction XMP + L-glutamine + ATP + H2O = GMP + L-glutamate + AMP + diphosphate + 2 H(+). It participates in purine metabolism; GMP biosynthesis; GMP from XMP (L-Gln route): step 1/1. Functionally, catalyzes the conversion of xanthine monophosphate (XMP) to GMP in the presence of glutamine and ATP through an adenyl-XMP intermediate. This Eremothecium gossypii (strain ATCC 10895 / CBS 109.51 / FGSC 9923 / NRRL Y-1056) (Yeast) protein is GMP synthase [glutamine-hydrolyzing] (GUA1).